A 278-amino-acid chain; its full sequence is Orotidine 5'-phosphate decarboxylase (278 aa).

Catalysis depends on K95, which acts as the Proton donor.

The protein belongs to the OMP decarboxylase family. Type 2 subfamily.

The enzyme catalyses orotidine 5'-phosphate + H(+) = UMP + CO2. Its pathway is pyrimidine metabolism; UMP biosynthesis via de novo pathway; UMP from orotate: step 2/2. The chain is Orotidine 5'-phosphate decarboxylase from Mycobacterium marinum (strain ATCC BAA-535 / M).